A 246-amino-acid chain; its full sequence is NAD-dependent protein deacylase (246 aa).

A Deacetylase sirtuin-type domain is found at 1 to 245; the sequence is MKEFITKHRD…ELIREILDNP (245 aa). 20-39 contacts NAD(+); it reads GAGISAESGIPTFRGSEGLW. Residues tyrosine 64 and arginine 67 each coordinate substrate. 98–101 is a binding site for NAD(+); it reads QNVD. The active-site Proton acceptor is histidine 116. Positions 124, 127, 146, and 149 each coordinate Zn(2+). Residues 186–188, 212–214, and threonine 230 contribute to the NAD(+) site; these read GTS and NPE.

This sequence belongs to the sirtuin family. Class III subfamily. Zn(2+) is required as a cofactor.

It is found in the cytoplasm. It carries out the reaction N(6)-acetyl-L-lysyl-[protein] + NAD(+) + H2O = 2''-O-acetyl-ADP-D-ribose + nicotinamide + L-lysyl-[protein]. It catalyses the reaction N(6)-succinyl-L-lysyl-[protein] + NAD(+) + H2O = 2''-O-succinyl-ADP-D-ribose + nicotinamide + L-lysyl-[protein]. NAD-dependent lysine deacetylase and desuccinylase that specifically removes acetyl and succinyl groups on target proteins. Modulates the activities of several proteins which are inactive in their acylated form. The polypeptide is NAD-dependent protein deacylase (Leptospira interrogans serogroup Icterohaemorrhagiae serovar copenhageni (strain Fiocruz L1-130)).